The sequence spans 290 residues: 33 kDa chaperonin (290 aa).

2 cysteine pairs are disulfide-bonded: C235/C237 and C268/C271.

Belongs to the HSP33 family. Under oxidizing conditions two disulfide bonds are formed involving the reactive cysteines. Under reducing conditions zinc is bound to the reactive cysteines and the protein is inactive.

The protein localises to the cytoplasm. Its function is as follows. Redox regulated molecular chaperone. Protects both thermally unfolding and oxidatively damaged proteins from irreversible aggregation. Plays an important role in the bacterial defense system toward oxidative stress. This Streptococcus pneumoniae serotype 19F (strain G54) protein is 33 kDa chaperonin.